Here is a 238-residue protein sequence, read N- to C-terminus: Testis-specific gene A8 protein (238 aa).

Residues 35–238 (GKGAKTNKRG…GEAVATTTMT (204 aa)) are disordered. The segment covering 39-48 (KTNKRGKRGG) has biased composition (basic residues). 8 repeat units span residues 79-93 (AAAA…PESS), 94-108 (AAAA…PESS), 109-123 (AAAA…PESS), 124-138 (AAAA…LESS), 153-158 (PAAPEA), 171-176 (PAAPEA), 180-185 (PAAPEA), and 189-194 (PAAPEA). The tract at residues 79–148 (AAAAAPEAAA…AAAAAPEAAA (70 aa)) is 4 X 15 AA tandem repeats of A-A-A-A-A-P-E-A-A-A-S-[PL]-E-S-S. 2 stretches are compositionally biased toward low complexity: residues 79–200 (AAAA…AAPA) and 208–220 (WEAA…AAVK). Positions 153–194 (PAAPEAAAAPEVAAAPATPAAPEATAAPAAPEAATTPAAPEA) are 4 X 6 AA repeats of P-A-A-P-E-A.

In terms of tissue distribution, specifically expressed in testis (at protein level).

It localises to the cytoplasm. It is found in the nucleus. The protein localises to the nucleoplasm. This Mus musculus (Mouse) protein is Testis-specific gene A8 protein.